The primary structure comprises 142 residues: HTH-type transcriptional regulator MntR (142 aa).

Residues 1-63 enclose the HTH dtxR-type domain; that stretch reads MPTPSMEDYI…YEKYRGLVLT (63 aa). Mn(2+) contacts are provided by Asp-8, Glu-11, His-77, Glu-99, Glu-102, and His-103.

Belongs to the DtxR/MntR family. As to quaternary structure, homodimer.

The protein localises to the cytoplasm. Its activity is regulated as follows. DNA binding is strongly activated by Mn(2+). Central regulator of manganese homeostasis. The polypeptide is HTH-type transcriptional regulator MntR (Bacillus cereus (strain ATCC 14579 / DSM 31 / CCUG 7414 / JCM 2152 / NBRC 15305 / NCIMB 9373 / NCTC 2599 / NRRL B-3711)).